The following is a 380-amino-acid chain: Succinyl-diaminopimelate desuccinylase (380 aa).

His-69 contributes to the Zn(2+) binding site. The active site involves Asp-71. Residue Asp-102 participates in Zn(2+) binding. Glu-135 acts as the Proton acceptor in catalysis. Zn(2+) contacts are provided by Glu-136, Glu-164, and His-353.

It belongs to the peptidase M20A family. DapE subfamily. Homodimer. Zn(2+) serves as cofactor. The cofactor is Co(2+).

It carries out the reaction N-succinyl-(2S,6S)-2,6-diaminopimelate + H2O = (2S,6S)-2,6-diaminopimelate + succinate. Its pathway is amino-acid biosynthesis; L-lysine biosynthesis via DAP pathway; LL-2,6-diaminopimelate from (S)-tetrahydrodipicolinate (succinylase route): step 3/3. Catalyzes the hydrolysis of N-succinyl-L,L-diaminopimelic acid (SDAP), forming succinate and LL-2,6-diaminopimelate (DAP), an intermediate involved in the bacterial biosynthesis of lysine and meso-diaminopimelic acid, an essential component of bacterial cell walls. The chain is Succinyl-diaminopimelate desuccinylase from Phenylobacterium zucineum (strain HLK1).